A 463-amino-acid polypeptide reads, in one-letter code: Homoserine O-acetyltransferase FUB5 (463 aa).

In terms of domain architecture, AB hydrolase-1 spans 113-436; it reads NVMIICHALS…VSDDGHDAFL (324 aa). S211 acts as the Nucleophile in catalysis. A compositionally biased stretch (basic and acidic residues) spans 296–312; the sequence is RFGRDTGSKKKTQKQES. The interval 296-331 is disordered; it reads RFGRDTGSKKKTQKQESKTLPSNSTPIHSHSGADET. Catalysis depends on residues D403 and H432.

Belongs to the AB hydrolase superfamily. MetX family.

It catalyses the reaction L-homoserine + acetyl-CoA = O-acetyl-L-homoserine + CoA. It functions in the pathway mycotoxin biosynthesis. Its function is as follows. Homoserine O-acetyltransferase; part of the gene cluster that mediates the biosynthesis of fusaric acid, a mycotoxin with low to moderate toxicity to animals and humans, but with high phytotoxic properties. L-aspartate is suggested as fusaric acid amino acid precursor that is activated and further processed to O-acetyl-L-homoserine by cluster enzymes aspartate kinase FUB3 and homoserine O-acetyltransferase FUB5, as well as enzymes of the primary metabolism. The polyketide synthase (PKS) FUB1 generates the triketide trans-2-hexenal which is presumptively released by the hydrolase FUB4 and linked to the NRPS-bound amino acid precursor by NAD(P)-dependent dehydrogenase FUB6. FUB1, FUB4, and the non-canonical NRPS Fub8 may form an enzyme complex. Further processing of the NRPS-bound intermediate might be carried out by FUB6 and the sulfhydrylase FUB7, enabling a spontaneous electrocyclization to close the carbon backbone of fusaric acid. Dihydrofusaric acid is likely to be released via reduction by the thioester reductase (TR) domain of FUB8 whereupon the final oxidation to fusaric acid may (also) be performed by the FMN-dependent dehydrogenase FUB9. The protein is Homoserine O-acetyltransferase FUB5 of Gibberella moniliformis (strain M3125 / FGSC 7600) (Maize ear and stalk rot fungus).